The primary structure comprises 130 residues: S-adenosylmethionine decarboxylase proenzyme (130 aa).

The active-site Schiff-base intermediate with substrate; via pyruvic acid is serine 78. Serine 78 is modified (pyruvic acid (Ser); by autocatalysis). Histidine 83 serves as the catalytic Proton acceptor; for processing activity. Residue cysteine 98 is the Proton donor; for catalytic activity of the active site.

It belongs to the prokaryotic AdoMetDC family. Type 1 subfamily. Heterotetramer of two alpha and two beta chains arranged as a dimer of alpha/beta heterodimers. The cofactor is pyruvate. In terms of processing, is synthesized initially as an inactive proenzyme. Formation of the active enzyme involves a self-maturation process in which the active site pyruvoyl group is generated from an internal serine residue via an autocatalytic post-translational modification. Two non-identical subunits are generated from the proenzyme in this reaction, and the pyruvate is formed at the N-terminus of the alpha chain, which is derived from the carboxyl end of the proenzyme. The post-translation cleavage follows an unusual pathway, termed non-hydrolytic serinolysis, in which the side chain hydroxyl group of the serine supplies its oxygen atom to form the C-terminus of the beta chain, while the remainder of the serine residue undergoes an oxidative deamination to produce ammonia and the pyruvoyl group blocking the N-terminus of the alpha chain.

The catalysed reaction is S-adenosyl-L-methionine + H(+) = S-adenosyl 3-(methylsulfanyl)propylamine + CO2. It participates in amine and polyamine biosynthesis; S-adenosylmethioninamine biosynthesis; S-adenosylmethioninamine from S-adenosyl-L-methionine: step 1/1. Functionally, catalyzes the decarboxylation of S-adenosylmethionine to S-adenosylmethioninamine (dcAdoMet), the propylamine donor required for the synthesis of the polyamines spermine and spermidine from the diamine putrescine. The sequence is that of S-adenosylmethionine decarboxylase proenzyme from Aeropyrum pernix (strain ATCC 700893 / DSM 11879 / JCM 9820 / NBRC 100138 / K1).